The sequence spans 395 residues: Carbohydrate sulfotransferase 5 (395 aa).

At 1–7 the chain is on the cytoplasmic side; it reads MRLPRFS. A helical; Signal-anchor for type II membrane protein membrane pass occupies residues 8-26; that stretch reads STVMLSLLMVQTGILVFLV. Residues 27–395 are Lumenal-facing; that stretch reads SRQVPSSPAG…ASSTEKQPES (369 aa). A 3'-phosphoadenylyl sulfate-binding site is contributed by 49-55; that stretch reads WRSGSSF. 2 N-linked (GlcNAc...) asparagine glycosylation sites follow: Asn116 and Asn142. 202-210 is a binding site for 3'-phosphoadenylyl sulfate; it reads RDPRAVLRS. Asn229 and Asn305 each carry an N-linked (GlcNAc...) asparagine glycan.

Belongs to the sulfotransferase 1 family. Gal/GlcNAc/GalNAc subfamily. Expressed in cornea.

It is found in the golgi apparatus membrane. In terms of biological role, sulfotransferase that utilizes 3'-phospho-5'-adenylyl sulfate (PAPS) as sulfonate donor to catalyze the transfer of sulfate to position 6 of non-reducing N-acetylglucosamine (GlcNAc) residues of keratan. Mediates sulfation of keratan in cornea. Keratan sulfate plays a central role in maintaining corneal transparency. Acts on the non-reducing terminal GlcNAc of short and long carbohydrate substrates that have poly-N-acetyllactosamine structures. May also have activity toward O-linked sugars of mucin-type acceptors. The protein is Carbohydrate sulfotransferase 5 (Chst5) of Mus musculus (Mouse).